We begin with the raw amino-acid sequence, 342 residues long: Heat-inducible transcription repressor HrcA (342 aa).

This sequence belongs to the HrcA family.

Functionally, negative regulator of class I heat shock genes (grpE-dnaK-dnaJ and groELS operons). Prevents heat-shock induction of these operons. This Mesoplasma florum (strain ATCC 33453 / NBRC 100688 / NCTC 11704 / L1) (Acholeplasma florum) protein is Heat-inducible transcription repressor HrcA.